The primary structure comprises 409 residues: Peptide chain release factor subunit 1 (409 aa).

This sequence belongs to the eukaryotic release factor 1 family. In terms of assembly, heterodimer of two subunits, one of which binds GTP.

Its subcellular location is the cytoplasm. Directs the termination of nascent peptide synthesis (translation) in response to the termination codons UAA, UAG and UGA. The chain is Peptide chain release factor subunit 1 from Methanopyrus kandleri (strain AV19 / DSM 6324 / JCM 9639 / NBRC 100938).